Here is a 124-residue protein sequence, read N- to C-terminus: NADH-quinone oxidoreductase subunit K (124 aa).

3 consecutive transmembrane segments (helical) span residues 28–48 (MEHG…GVMV), 52–72 (FLFM…AFIV), and 84–104 (IMFI…LAIL).

The protein belongs to the complex I subunit 4L family. NDH-1 is composed of 14 different subunits. Subunits NuoA, H, J, K, L, M, N constitute the membrane sector of the complex.

The protein localises to the cell inner membrane. The catalysed reaction is a quinone + NADH + 5 H(+)(in) = a quinol + NAD(+) + 4 H(+)(out). Functionally, NDH-1 shuttles electrons from NADH, via FMN and iron-sulfur (Fe-S) centers, to quinones in the respiratory chain. The immediate electron acceptor for the enzyme in this species is believed to be ubiquinone. Couples the redox reaction to proton translocation (for every two electrons transferred, four hydrogen ions are translocated across the cytoplasmic membrane), and thus conserves the redox energy in a proton gradient. In Psychrobacter sp. (strain PRwf-1), this protein is NADH-quinone oxidoreductase subunit K.